The primary structure comprises 295 residues: Phosphoribosylaminoimidazole-succinocarboxamide synthase (295 aa).

It belongs to the SAICAR synthetase family.

The catalysed reaction is 5-amino-1-(5-phospho-D-ribosyl)imidazole-4-carboxylate + L-aspartate + ATP = (2S)-2-[5-amino-1-(5-phospho-beta-D-ribosyl)imidazole-4-carboxamido]succinate + ADP + phosphate + 2 H(+). It participates in purine metabolism; IMP biosynthesis via de novo pathway; 5-amino-1-(5-phospho-D-ribosyl)imidazole-4-carboxamide from 5-amino-1-(5-phospho-D-ribosyl)imidazole-4-carboxylate: step 1/2. The polypeptide is Phosphoribosylaminoimidazole-succinocarboxamide synthase (Nitrosomonas europaea (strain ATCC 19718 / CIP 103999 / KCTC 2705 / NBRC 14298)).